We begin with the raw amino-acid sequence, 143 residues long: MKINVINQQELREINSKKIKDIAKKVLLNEVGKGNFELNILITDDKSITEFNKYRGKSTPTDVLSFSYGLSEPVIGDIVISVESIEKQAPDFGNSFEEEFYYILIHGLLHIVGYDHENSEEDAKKMFEVQDQYFHQLIKDRRR.

Zn(2+) is bound by residues His106, His110, and His116.

It belongs to the endoribonuclease YbeY family. Zn(2+) serves as cofactor.

Its subcellular location is the cytoplasm. In terms of biological role, single strand-specific metallo-endoribonuclease involved in late-stage 70S ribosome quality control and in maturation of the 3' terminus of the 16S rRNA. The chain is Endoribonuclease YbeY from Petrotoga mobilis (strain DSM 10674 / SJ95).